The following is a 77-amino-acid chain: MAVKLKIKKGDSVKVITGDDKGKTGKVLAVYPKTLKVVVEGCKIAKKAIKPSEKNPNGGFINKEMPMDISNVAKVQE.

It belongs to the universal ribosomal protein uL24 family. Part of the 50S ribosomal subunit.

Its function is as follows. One of two assembly initiator proteins, it binds directly to the 5'-end of the 23S rRNA, where it nucleates assembly of the 50S subunit. In terms of biological role, one of the proteins that surrounds the polypeptide exit tunnel on the outside of the subunit. This Campylobacter jejuni subsp. jejuni serotype O:6 (strain 81116 / NCTC 11828) protein is Large ribosomal subunit protein uL24.